The following is a 155-amino-acid chain: Ribosome maturation factor RimP (155 aa).

It belongs to the RimP family.

The protein localises to the cytoplasm. In terms of biological role, required for maturation of 30S ribosomal subunits. This Gloeothece citriformis (strain PCC 7424) (Cyanothece sp. (strain PCC 7424)) protein is Ribosome maturation factor RimP.